The sequence spans 318 residues: Ribose-phosphate pyrophosphokinase 2 (318 aa).

Arginine 96–aspartate 101 is an ATP binding site. Mg(2+)-binding residues include aspartate 128, histidine 130, aspartate 139, and aspartate 143. Position 130 (histidine 130) interacts with ATP. The interval lysine 212–glycine 227 is binding of phosphoribosylpyrophosphate.

This sequence belongs to the ribose-phosphate pyrophosphokinase family. As to quaternary structure, homodimer. The active form is probably a hexamer composed of 3 homodimers. It depends on Mg(2+) as a cofactor.

The catalysed reaction is D-ribose 5-phosphate + ATP = 5-phospho-alpha-D-ribose 1-diphosphate + AMP + H(+). The protein operates within metabolic intermediate biosynthesis; 5-phospho-alpha-D-ribose 1-diphosphate biosynthesis; 5-phospho-alpha-D-ribose 1-diphosphate from D-ribose 5-phosphate (route I): step 1/1. Activated by magnesium and inorganic phosphate. Its function is as follows. Catalyzes the synthesis of phosphoribosylpyrophosphate (PRPP) that is essential for nucleotide synthesis. In Rattus norvegicus (Rat), this protein is Ribose-phosphate pyrophosphokinase 2 (Prps2).